The sequence spans 101 residues: uncharacterized protein (101 aa).

The helical transmembrane segment at 58 to 80 (VFPSLNIIILMSDALMFFLRSSI) threads the bilayer.

The protein localises to the membrane. This is an uncharacterized protein from Saccharomyces cerevisiae (strain ATCC 204508 / S288c) (Baker's yeast).